Consider the following 266-residue polypeptide: Probable sulfate transport system permease protein cysT (266 aa).

A run of 7 helical transmembrane segments spans residues 12 to 32 (ILLF…FLLI), 59 to 79 (MAFY…WVLT), 91 to 111 (AAVD…LATV), 129 to 149 (IVFT…PFVI), 181 to 201 (VILP…FSRA), 206 to 226 (GSIV…SVLI), and 236 to 256 (LGAS…LLLI). In terms of domain architecture, ABC transmembrane type-1 spans 53 to 257 (YLLTVQMAFY…IALFTLLLIN (205 aa)).

The protein belongs to the binding-protein-dependent transport system permease family. CysTW subfamily.

The protein resides in the plastid. It is found in the chloroplast membrane. Part of the ABC transporter complex cysAWTP (TC 3.A.1.6.1) involved in sulfate/thiosulfate import. Probably responsible for the translocation of the substrate across the membrane. This Chlorella vulgaris (Green alga) protein is Probable sulfate transport system permease protein cysT (cysT).